Here is a 131-residue protein sequence, read N- to C-terminus: Large ribosomal subunit protein bL17 (131 aa).

The protein belongs to the bacterial ribosomal protein bL17 family. Part of the 50S ribosomal subunit. Contacts protein L32.

This Thermotoga maritima (strain ATCC 43589 / DSM 3109 / JCM 10099 / NBRC 100826 / MSB8) protein is Large ribosomal subunit protein bL17.